A 258-amino-acid polypeptide reads, in one-letter code: UPF0246 protein YaaA (258 aa).

It belongs to the UPF0246 family.

This chain is UPF0246 protein YaaA, found in Shigella sonnei (strain Ss046).